The primary structure comprises 236 residues: MPPRELSEAESSPLRSPTPPPGRGSASPELGIKCVLVGDGAVGKSSLIVSYTCNGYPARYRPTALDTFSVQVLVDGAPVRIELWDTAGQEDLDRLRSLCYPDTDVFLACFSVVQPSSFQNITEKWLPEIRTHNPQAPVLLVGTQADLRDDVNVLIQLDQGGREGPVPQPQAQGLAEKIRACCYLECSALTQKNLKEVFDSAILSAIEHKARLEKKLNAKGVRTLSRCRWKKFFCFV.

Positions 1–27 (MPPRELSEAESSPLRSPTPPPGRGSAS) are disordered. Phosphoserine is present on S25. Residues 38-45 (GDGAVGKS), 85-89 (DTAGQ), and 143-146 (TQAD) contribute to the GTP site. A lipid anchor (S-palmitoyl cysteine) is attached at C234.

The protein belongs to the small GTPase superfamily. Rho family. As to quaternary structure, interacts with PAK2. The cofactor is Mg(2+).

Its subcellular location is the cell membrane. The protein localises to the endosome membrane. In terms of biological role, plays a role in the control of the actin cytoskeleton via activation of the JNK pathway. The polypeptide is Rho-related GTP-binding protein RhoV (Bos taurus (Bovine)).